The primary structure comprises 209 residues: MDVILLERIEKLGHIGDVVAVKNGYARNFLLPRKKALRANEANRKIFEANRAQIEADNAARRTDAEKESEVVNGLTVTLIRQASNTGHLYGSVSARDLADAIVEAKPEAKVAKNQIVLDRPIKSIGISEVRVVLHPEVAVKIKVNVARSPEEAELQAEGVDVMNQMFERDGASFTEDYDPNAEPGLATEAEEAVADADDNAETNSEESL.

The disordered stretch occupies residues 169-209 (RDGASFTEDYDPNAEPGLATEAEEAVADADDNAETNSEESL). Acidic residues predominate over residues 189–209 (EAEEAVADADDNAETNSEESL).

Belongs to the bacterial ribosomal protein bL9 family.

In terms of biological role, binds to the 23S rRNA. The sequence is that of Large ribosomal subunit protein bL9 from Zymomonas mobilis subsp. mobilis (strain ATCC 31821 / ZM4 / CP4).